The sequence spans 195 residues: Proline-rich protein 3 (195 aa).

An N-terminal signal peptide occupies residues 1–29 (MKMNFFNSFPQYGVYILGLNLLLCGVSEG).

Component of the acid-insoluble organic matrix of calcified layers of the shell (at protein level).

The protein localises to the secreted. This Lottia gigantea (Giant owl limpet) protein is Proline-rich protein 3.